A 24-amino-acid chain; its full sequence is Alpha-lactalbumin (24 aa).

The protein belongs to the glycosyl hydrolase 22 family. As to quaternary structure, lactose synthase (LS) is a heterodimer of a catalytic component, beta1,4-galactosyltransferase (beta4Gal-T1) and a regulatory component, alpha-lactalbumin (LA). Post-translationally, glycosylated (50% of the proteins). Mammary gland specific. Secreted in milk.

Its subcellular location is the secreted. Regulatory subunit of lactose synthase, changes the substrate specificity of galactosyltransferase in the mammary gland making glucose a good acceptor substrate for this enzyme. This enables LS to synthesize lactose, the major carbohydrate component of milk. In other tissues, galactosyltransferase transfers galactose onto the N-acetylglucosamine of the oligosaccharide chains in glycoproteins. This chain is Alpha-lactalbumin (LALBA), found in Felis catus (Cat).